We begin with the raw amino-acid sequence, 160 residues long: Deoxyuridine 5'-triphosphate nucleotidohydrolase (160 aa).

Residues Ser80, Gly93, Asp96, Tyr99, Lys104, Arg149, Phe154, and Gly155 each coordinate dUMP.

Belongs to the dUTPase family. As to quaternary structure, homotrimer. The cofactor is Mg(2+).

The catalysed reaction is dUTP + H2O = dUMP + diphosphate + H(+). Its pathway is pyrimidine metabolism; dUMP biosynthesis; dUMP from dCTP (dUTP route): step 2/2. Its function is as follows. Involved in nucleotide metabolism via production of dUMP, the immediate precursor of thymidine nucleotides, and decreases the intracellular concentration of dUTP so that uracil cannot be incorporated into DNA. The sequence is that of Deoxyuridine 5'-triphosphate nucleotidohydrolase (DUT1) from Debaryomyces hansenii (strain ATCC 36239 / CBS 767 / BCRC 21394 / JCM 1990 / NBRC 0083 / IGC 2968) (Yeast).